Here is a 340-residue protein sequence, read N- to C-terminus: Glycerol-3-phosphate dehydrogenase [NAD(P)+] (340 aa).

Residues Ser15, Tyr16, His36, and Lys110 each contribute to the NADPH site. Positions 110, 139, and 141 each coordinate sn-glycerol 3-phosphate. Ala143 provides a ligand contact to NADPH. Residues Lys196, Asp249, Ser259, Arg260, and Asn261 each contribute to the sn-glycerol 3-phosphate site. The active-site Proton acceptor is Lys196. An NADPH-binding site is contributed by Arg260. NADPH-binding residues include Val284 and Glu286.

It belongs to the NAD-dependent glycerol-3-phosphate dehydrogenase family.

Its subcellular location is the cytoplasm. It carries out the reaction sn-glycerol 3-phosphate + NAD(+) = dihydroxyacetone phosphate + NADH + H(+). The catalysed reaction is sn-glycerol 3-phosphate + NADP(+) = dihydroxyacetone phosphate + NADPH + H(+). It functions in the pathway membrane lipid metabolism; glycerophospholipid metabolism. In terms of biological role, catalyzes the reduction of the glycolytic intermediate dihydroxyacetone phosphate (DHAP) to sn-glycerol 3-phosphate (G3P), the key precursor for phospholipid synthesis. The polypeptide is Glycerol-3-phosphate dehydrogenase [NAD(P)+] (Serratia marcescens).